Reading from the N-terminus, the 483-residue chain is MPTMGALHAGHGTVIRAASAMGPVLVSVFVNPLQFGPDEDLARYPRSLESDLVVAERWGAAALWAPSVEQIYPQGGERHPSTIQVPPGLQKHLCGAARPGHFDGVVTVVARLLDLVRPRQLWLGEKDWQQLVILRWLVAHLARPVIVQGVATVREADGLALSSRNQYLSPDQRRMAAALPEALHAARGDGSDPIPALRGSLSDAGFEVEYVQRVDPCTLQPCGDETAISLLAAAVRCGSTRLIDHAFLMTRQPLVAIDGPAGAGKSTVTRAFAERLGLVYLDTGAMYRSVTWLVLERGVNPSDGVAIEPLLKDLDVQLQSLPGGVQQVLVNGEDVSSAIRSPDVTASVSAVAAHRCVRQALTVQQKSMGSKGGLVAEGRDIGTAVFPHADLKVFLTATVTERARRRALDLEQRGFAVPERAELEAQIAERDRLDSTREEAPLMQADDAIELVTDGMDIDAVIEALVRLFRERVAEEAWPTPQR.

The tract at residues Met1 to Ala246 is pantoate--beta-alanine ligase. Met4–His11 provides a ligand contact to ATP. The Proton donor role is filled by His11. Gln34 is a (R)-pantoate binding site. Position 34 (Gln34) interacts with beta-alanine. Gly124 to Asp127 serves as a coordination point for ATP. Gln130 contributes to the (R)-pantoate binding site. Residues Val153 and Leu161–Arg164 contribute to the ATP site. Positions Phe247–Arg483 are cytidylate kinase.

It in the N-terminal section; belongs to the pantothenate synthetase family. In the C-terminal section; belongs to the cytidylate kinase family. Type 1 subfamily.

It is found in the cytoplasm. It catalyses the reaction (R)-pantoate + beta-alanine + ATP = (R)-pantothenate + AMP + diphosphate + H(+). The enzyme catalyses CMP + ATP = CDP + ADP. It carries out the reaction dCMP + ATP = dCDP + ADP. It participates in cofactor biosynthesis; (R)-pantothenate biosynthesis; (R)-pantothenate from (R)-pantoate and beta-alanine: step 1/1. In terms of biological role, catalyzes the condensation of pantoate with beta-alanine in an ATP-dependent reaction via a pantoyl-adenylate intermediate. Catalyzes the transfer of a phosphate group from ATP to either CMP or dCMP to form CDP or dCDP and ADP, respectively. The sequence is that of Bifunctional pantoate ligase/cytidylate kinase from Synechococcus sp. (strain CC9902).